The sequence spans 219 residues: Transmembrane emp24 domain-containing protein 10 (219 aa).

The first 31 residues, 1–31 (MSGLFGPLSRPGPLPSAWLFLLLLGPSSVLG), serve as a signal peptide directing secretion. The tract at residues 1 to 142 (MSGLFGPLSR…KNYEEIAKVE (142 aa)) is required for interaction with STX17. Topologically, residues 32–185 (ISFHLPVNSR…RDTNESTNTR (154 aa)) are lumenal. The 153-residue stretch at 41–193 (RKCLREEIHK…TRVLYFSIFS (153 aa)) folds into the GOLD domain. The segment at 147–178 (LEVELRRLEDLSESIVNDFAYMKKREEEMRDT) is required for TMED10 and TMED2 cis-Golgi network localization. A dimethylated arginine mark is found at Arg-171 and Arg-176. Residue Asn-179 is glycosylated (N-linked (GlcNAc...) asparagine). The chain crosses the membrane as a helical span at residues 186-206 (VLYFSIFSMFCLIGLATWQVF). The interaction with COPG1 stretch occupies residues 204-219 (QVFYLRRFFKAKKLIE). Residues 207 to 219 (YLRRFFKAKKLIE) lie on the Cytoplasmic side of the membrane. The interaction with ARF1 and IL1B stretch occupies residues 207 to 219 (YLRRFFKAKKLIE). The short motif at 211-212 (FF) is the COPII vesicle coat-binding element. Residues 211 to 219 (FFKAKKLIE) carry the COPI vesicle coat-binding motif.

Belongs to the EMP24/GP25L family. As to quaternary structure, predominantly dimeric and to a lesser extent monomeric in the ER. Monomer and dimer in ERGIC and cis-Golgi network. Forms homooligomer (via GOLD domain); the assembly is promoted by direct binding with leaderless cargos and may form a protein channel that facilitates cargo entry into the ERGIC. Forms heterooligomeric complexes with other members of the p24 family such as TMED2, TMED7 and TMED9. Interacts (via GOLD domain) with TMED2 (via GOLD domain); the complex is required for export of TMED10 from the ER to the cis-Golgi network; the complex is proposed to be involved in cis-Golgi network dynamics and / or biogenesis. Associates with the COPI vesicle coat subunits (coatomer). Tetramerization of the cytoplasmic domain at the Golgi membrane in vitro; the complex is proposed to interact with COPI coatomer and induce budding of the vesicles. Interacts with COPG1; the interaction involves TMED10 homodimer. Interacts with ARF1 (GDP-bound); the interaction probably involves a TMED10 oligomer. Interacts with SEC23A, SEC24B, SEC24C and SEC24D components of the coat protein complex II/COPII, indicative of an association of TMED10 with the COPII vesicle coat. Interacts with CD59. Interacts with MPPE1/PGAP5; the complex might recruit and sort GPI-anchored proteins to the ER-exit site, or the interaction might lead to recycling of PGAP5 between the ER and the Golgi. Interacts with F2LR1/PAR2. Interacts with KDELR2/ERD2; the interaction is disrupted by KDELR2 ligand. Found in a complex composed at least of SURF4, TMED2 and TMED10. Associates with the presenilin-dependent gamma-secretase complex. Interacts with STX17; the interaction is direct. Interacts with IL-1; the interaction is direct. Interacts with RAB21 (active GTP-bound form); the interaction is indirect and regulates TMED10 abundance and localization at the Golgi.

The protein localises to the endoplasmic reticulum membrane. It localises to the endoplasmic reticulum-Golgi intermediate compartment membrane. It is found in the golgi apparatus membrane. The protein resides in the golgi apparatus. Its subcellular location is the cis-Golgi network membrane. The protein localises to the trans-Golgi network membrane. It localises to the cytoplasmic vesicle. It is found in the secretory vesicle membrane. The protein resides in the cell membrane. Its subcellular location is the melanosome. In terms of biological role, cargo receptor involved in protein vesicular trafficking and quality control in the endoplasmic reticulum (ER) and Golgi. The p24 protein family is a group of transmembrane proteins that bind coat protein complex I/COPI and coat protein complex II/COPII involved in vesicular trafficking between the membranes. Acts at the lumenal side for incorporation of secretory cargo molecules into transport vesicles and involved in vesicle coat formation at the cytoplasmic side. Mainly functions in the early secretory pathway and cycles between the ER, ER-Golgi intermediate compartment (ERGIC) and Golgi, mediating cargo transport through COPI and COPII-coated vesicles. In COPII vesicle-mediated anterograde transport, involved in the transport of GPI-anchored proteins by acting together with TMED2 as their cargo receptor; the function specifically implies SEC24C and SEC24D of the COPII vesicle coat and lipid raft-like microdomains of the ER. Recognizes GPI anchors structural remodeled in the ER by the GPI inositol-deacylase/PGAP1 and the metallophosphoesterase MPPE1/PGAP5. In COPI vesicle-mediated retrograde transport, involved in the biogenesis of COPI vesicles and vesicle coat recruitment. Involved in trafficking of amyloid beta A4 protein and soluble APP-beta release (independent from the modulation of gamma-secretase activity). Involved in the KDELR2-mediated retrograde transport of the toxin A subunit (CTX-A-K63)together with COPI and the COOH terminus of KDELR2. On Golgi membranes, acts as a primary receptor for ARF1-GDP, a GTP-binding protein involved in COPI-vesicle formation. Increases coatomer-dependent GTPase-activating activity of ARFGAP2 which mediates the hydrolysis of ARF1-bound GTP and therefore modulates protein trafficking from the Golgi apparatus. Involved in the exocytic trafficking of G protein-coupled receptors F2LR1/PAR2 (trypsin and tryspin-like enzyme receptor), OPRM1 (opioid receptor) and P2RY4 (UTD and UDP receptor) from the Golgi to the plasma membrane, thus contributing to receptor resensitization. In addition to its cargo receptor activity, may also act as a protein channel after oligomerization, facilitating the post-translational entry of leaderless cytoplasmic cargo into the ERGIC. Involved in the translocation into ERGIC, the vesicle entry and the secretion of leaderless cargos (lacking the secretion signal sequence), including the mature form of interleukin 1/IL-1 family members, the alpha-crystallin B chain HSPB5, the carbohydrate-binding proteins galectin-1/LGALS1 and galectin-3/LGALS3, the microtubule-associated protein Tau/MAPT, and the annexin A1/ANXA1; the translocation process is dependent on cargo protein unfolding and enhanced by chaperones HSP90AB1 and HSP90B1/GRP9. Could also associates with the presenilin-dependent gamma-secretase complex in order to regulate gamma-cleavages of the amyloid beta A4 protein to yield amyloid-beta 40/Abeta40. This is Transmembrane emp24 domain-containing protein 10 from Mus musculus (Mouse).